The primary structure comprises 224 residues: Ribonuclease 3 (224 aa).

In terms of domain architecture, RNase III spans A5–D127. Position 40 (E40) interacts with Mg(2+). The active site involves D44. Positions 113 and 116 each coordinate Mg(2+). The active site involves E116. The 71-residue stretch at D154 to S224 folds into the DRBM domain.

The protein belongs to the ribonuclease III family. As to quaternary structure, homodimer. Mg(2+) is required as a cofactor.

The protein resides in the cytoplasm. It carries out the reaction Endonucleolytic cleavage to 5'-phosphomonoester.. Functionally, digests double-stranded RNA. Involved in the processing of primary rRNA transcript to yield the immediate precursors to the large and small rRNAs (23S and 16S). Processes some mRNAs, and tRNAs when they are encoded in the rRNA operon. Processes pre-crRNA and tracrRNA of type II CRISPR loci if present in the organism. The polypeptide is Ribonuclease 3 (Photobacterium profundum (strain SS9)).